Consider the following 149-residue polypeptide: Myoglobin (149 aa).

Alanine 2 bears the N-acetylalanine mark. A Globin domain is found at 2 to 143 (ABWDKVNSVW…ICSDIEKEYK (142 aa)). Residue histidine 89 participates in heme b binding.

Belongs to the globin family. As to quaternary structure, monomeric.

Its subcellular location is the cytoplasm. It localises to the sarcoplasm. It catalyses the reaction Fe(III)-heme b-[protein] + nitric oxide + H2O = Fe(II)-heme b-[protein] + nitrite + 2 H(+). The enzyme catalyses H2O2 + AH2 = A + 2 H2O. Its function is as follows. Monomeric heme protein which primary function is to store oxygen and facilitate its diffusion within muscle tissues. Reversibly binds oxygen through a pentacoordinated heme iron and enables its timely and efficient release as needed during periods of heightened demand. Depending on the oxidative conditions of tissues and cells, and in addition to its ability to bind oxygen, it also has a nitrite reductase activity whereby it regulates the production of bioactive nitric oxide. Under stress conditions, like hypoxia and anoxia, it also protects cells against reactive oxygen species thanks to its pseudoperoxidase activity. This Hemitriakis japanica (Japanese topeshark) protein is Myoglobin (mb).